A 121-amino-acid polypeptide reads, in one-letter code: UPF0102 protein XF_0554 (121 aa).

It belongs to the UPF0102 family.

The protein is UPF0102 protein XF_0554 of Xylella fastidiosa (strain 9a5c).